Here is a 75-residue protein sequence, read N- to C-terminus: Small ribosomal subunit protein bS18c (75 aa).

It belongs to the bacterial ribosomal protein bS18 family. In terms of assembly, part of the 30S ribosomal subunit.

Its subcellular location is the plastid. The sequence is that of Small ribosomal subunit protein bS18c from Aneura mirabilis (Parasitic liverwort).